A 215-amino-acid polypeptide reads, in one-letter code: Cytokinin riboside 5'-monophosphate phosphoribohydrolase LOG3 (215 aa).

Residues glutamate 84, 102-103 (RK), 119-125 (GYGTLEE), and threonine 131 each bind substrate.

Belongs to the LOG family. As to expression, expressed in roots and shoots. Detected in root procambium, lateral root primordia, vascular tissues of immature leaves, axillary buds, style and ovular funiculus.

It is found in the cytoplasm. The protein localises to the nucleus. The catalysed reaction is N(6)-(dimethylallyl)adenosine 5'-phosphate + H2O = N(6)-dimethylallyladenine + D-ribose 5-phosphate. It carries out the reaction 9-ribosyl-trans-zeatin 5'-phosphate + H2O = trans-zeatin + D-ribose 5-phosphate. Its function is as follows. Cytokinin-activating enzyme working in the direct activation pathway. Phosphoribohydrolase that converts inactive cytokinin nucleotides to the biologically active free-base forms. This is Cytokinin riboside 5'-monophosphate phosphoribohydrolase LOG3 (LOG3) from Arabidopsis thaliana (Mouse-ear cress).